The chain runs to 369 residues: Chanoclavine-I aldehyde reductase fgaOx3 (369 aa).

Residues 23–25 (PMT), A58, Q100, and H169 each bind FMN. 2 residues coordinate substrate: H169 and N172. Residue Y174 is the Proton donor of the active site. FMN contacts are provided by residues G292, 316 to 317 (GR), and R317. Y344 serves as a coordination point for substrate.

The protein belongs to the NADH:flavin oxidoreductase/NADH oxidase family. As to quaternary structure, monomer. The cofactor is FMN.

The catalysed reaction is dihydrochanoclavine-I aldehyde + NADP(+) = chanoclavine-I aldehyde + NADPH + H(+). It functions in the pathway alkaloid biosynthesis; ergot alkaloid biosynthesis. In terms of biological role, chanoclavine-I aldehyde reductase; part of the gene cluster that mediates the biosynthesis of isofumigaclavines, fungal ergot alkaloids. The tryptophan dimethylallyltransferase ifgA catalyzes the first step of ergot alkaloid biosynthesis by condensing dimethylallyl diphosphate (DMAP) and tryptophan to form 4-dimethylallyl-L-tryptophan. The second step is catalyzed by the methyltransferase ifgB that methylates 4-dimethylallyl-L-tryptophan in the presence of S-adenosyl-L-methionine, resulting in the formation of N-methyl-dimethylallyl-L-tryptophan. The catalase ifgD and the FAD-dependent oxidoreductase ifgC then transform N-methyl-dimethylallyl-L-tryptophan to chanoclavine-I which is further oxidized by ifgE in the presence of NAD(+), resulting in the formation of chanoclavine-I aldehyde. The chanoclavine-I aldehyde reductases ifgG and/or fgaOx3 reduce chanoclavine-I aldehyde to dihydrochanoclavine-I aldehyde that spontaneously dehydrates to form 6,8-dimethyl-6,7-didehydroergoline. The festuclavine dehydrogenases ifgF1 and/or ifgF2 then catalyze the reduction of 6,8-dimethyl-6,7-didehydroergoline to form festuclavine. Hydrolysis of festuclavine by a yet undetermined cytochrome P450 monooxygenase (called ifgH) then leads to the formation of isofumigaclavine B which is in turn acetylated by ifgI to isofumigaclavine A. Penicillium roqueforti has interestingly at least two sets of genes for the consumption of chanoclavine-I aldehyde on three different loci, the OYEs ifgG/fgaOx3 and the festuclavine synthase homologs ifgF1/ifgF2. The reason for the duplication of these genes is unclear, probably to ensure the conversion of chanoclavine-I aldehyde by differential gene expression under various environmental conditions. This chain is Chanoclavine-I aldehyde reductase fgaOx3, found in Penicillium roqueforti (strain FM164).